A 669-amino-acid chain; its full sequence is Serine/threonine-protein kinase hippo (669 aa).

Phosphoserine occurs at positions 30 and 33. Positions 42–293 (FDIMYKLGEG…ATELLEHEFI (252 aa)) constitute a Protein kinase domain. Residues 48-56 (LGEGSYGSV) and Lys71 each bind ATP. Catalysis depends on Asp161, which acts as the Proton acceptor. Thr195 is modified (phosphothreonine; by Tao). Residues 432-445 (MVINSDSDDSTTAK) are compositionally biased toward polar residues. The interval 432–508 (MVINSDSDDS…QQQQQDEQHL (77 aa)) is disordered. Basic and acidic residues predominate over residues 460-479 (FLEHFDRKNAGDGRGDEKPI). Residues 490–503 (QQQQQQQQQQQQQQ) show a composition bias toward low complexity. The SARAH domain maps to 608–655 (FEFLKFLTFDDLNQRLCNIDHEMELEIEQLNKKYNAKRQPIVDAMNAK).

The protein belongs to the protein kinase superfamily. STE Ser/Thr protein kinase family. STE20 subfamily. Homodimer. Interacts with Sav and Wts. Interacts (via SARAH domain) with Ex. Interacts with Kibra. Autophosphorylated. Expressed in CNS during embryogenesis. In third instar larvae, it is expressed throughout all imaginal disks.

It localises to the apical cell membrane. The protein localises to the cytoplasm. The catalysed reaction is L-seryl-[protein] + ATP = O-phospho-L-seryl-[protein] + ADP + H(+). The enzyme catalyses L-threonyl-[protein] + ATP = O-phospho-L-threonyl-[protein] + ADP + H(+). Its function is as follows. Plays a key role in the Hippo/SWH (Sav/Wts/Hpo) signaling pathway, a signaling pathway that plays a pivotal role in organ size control and tumor suppression by restricting proliferation and promoting apoptosis. The core of this pathway is composed of a kinase cascade wherein Hippo (Hpo), in complex with its regulatory protein Salvador (Sav), phosphorylates and activates Warts (Wts) in complex with its regulatory protein Mats, which in turn phosphorylates and inactivates the Yorkie (Yki) oncoprotein. The Hippo/SWH signaling pathway inhibits the activity of the transcriptional complex formed by Scalloped (sd) and Yki and the target genes of this pathway include cyclin-E (cycE), diap1 and bantam. Phosphorylates Sav, Wts and Th/DIAP1. Regulates the level of Th/DIAP1 apoptosis inhibitor. The polypeptide is Serine/threonine-protein kinase hippo (hpo) (Drosophila melanogaster (Fruit fly)).